A 432-amino-acid chain; its full sequence is Adenylosuccinate synthetase 2 (432 aa).

GTP is bound by residues 12-18 and 40-42; these read GDEGKGR and GHT. Asp-13 functions as the Proton acceptor in the catalytic mechanism. Mg(2+) contacts are provided by Asp-13 and Gly-40. Residues 13–16, 38–41, Thr-128, Arg-142, Gln-222, Thr-237, and Arg-301 each bind IMP; these read DEGK and NAGH. The active-site Proton donor is the His-41. 297–303 is a substrate binding site; that stretch reads VNTGRPR. Residues Arg-303, 329–331, and 411–413 each bind GTP; these read KLD and TTG.

It belongs to the adenylosuccinate synthetase family. Homodimer. The cofactor is Mg(2+).

It localises to the cytoplasm. The enzyme catalyses IMP + L-aspartate + GTP = N(6)-(1,2-dicarboxyethyl)-AMP + GDP + phosphate + 2 H(+). It participates in purine metabolism; AMP biosynthesis via de novo pathway; AMP from IMP: step 1/2. Functionally, plays an important role in the de novo pathway of purine nucleotide biosynthesis. Catalyzes the first committed step in the biosynthesis of AMP from IMP. This chain is Adenylosuccinate synthetase 2, found in Burkholderia lata (strain ATCC 17760 / DSM 23089 / LMG 22485 / NCIMB 9086 / R18194 / 383).